A 120-amino-acid chain; its full sequence is Large ribosomal subunit protein uL18 (120 aa).

Over residues 1 to 10 the composition is skewed to basic and acidic residues; sequence MKLNRVESTR. The segment at 1–26 is disordered; sequence MKLNRVESTRSRHRRVRRKVGGTGDR. The span at 11-20 shows a compositional bias: basic residues; that stretch reads SRHRRVRRKV.

It belongs to the universal ribosomal protein uL18 family. Part of the 50S ribosomal subunit; part of the 5S rRNA/L5/L18/L25 subcomplex. Contacts the 5S and 23S rRNAs.

Its function is as follows. This is one of the proteins that bind and probably mediate the attachment of the 5S RNA into the large ribosomal subunit, where it forms part of the central protuberance. The protein is Large ribosomal subunit protein uL18 of Cyanothece sp. (strain PCC 7425 / ATCC 29141).